We begin with the raw amino-acid sequence, 646 residues long: NADP-dependent malic enzyme 4, chloroplastic (646 aa).

The N-terminal 74 residues, 1–74 (MISLTPSLFL…LETSAADIVP (74 aa)), are a transit peptide targeting the chloroplast. Tyrosine 194 serves as the catalytic Proton donor. Arginine 247 serves as a coordination point for NADP(+). The active-site Proton acceptor is lysine 265. Residues glutamate 337, aspartate 338, and aspartate 361 each contribute to the a divalent metal cation site. NADP(+) is bound by residues aspartate 361, 390–406 (LFLG…ELIA), and asparagine 502.

Belongs to the malic enzymes family. As to quaternary structure, homodimer and homotetramer. Requires Mg(2+) as cofactor. Mn(2+) is required as a cofactor. In terms of tissue distribution, expressed in leaves, stems, flowers and roots, mainly in vascular system. In roots, present in the stele, including the vascular tissue and the pericycle, mainly at emerging lateral roots and at root tips.

The protein localises to the plastid. It is found in the chloroplast. The enzyme catalyses (S)-malate + NADP(+) = pyruvate + CO2 + NADPH. It catalyses the reaction oxaloacetate + H(+) = pyruvate + CO2. The protein operates within photosynthesis; C3 acid pathway. Its function is as follows. The chloroplastic ME isoform decarboxylates malate shuttled from neighboring mesophyll cells. The CO(2) released is then refixed by ribulose-bisphosphate carboxylase. This pathway eliminates the photorespiratory loss of CO(2) that occurs in most plants. The sequence is that of NADP-dependent malic enzyme 4, chloroplastic (NADP-ME4) from Arabidopsis thaliana (Mouse-ear cress).